A 7481-amino-acid polypeptide reads, in one-letter code: Polyketide synthase GfsA (7481 aa).

Residues 24-1020 (ASDEPIAVIG…ETAEFVRARL (997 aa)) are loading module (LM). The Ketosynthase family 3 (KS3) 1 domain maps to 26-451 (DEPIAVIGLS…GTNCHVVVSA (426 aa)). A disordered region spans residues 60 to 80 (RVPADRETPPSTEEESADGEA). Gln197 (for decarboxylation activity of LM) is an active-site residue. Ser662 acts as the For acyltransferase activity of LM in catalysis. Residues 945 to 1020 (PDPVETVRQL…ETAEFVRARL (76 aa)) form the Carrier 1 domain. Ser980 bears the O-(pantetheine 4'-phosphoryl)serine mark. The Ketosynthase family 3 (KS3) 2 domain maps to 1038–1454 (DEPIAVVAMS…GTNAHVILEQ (417 aa)). Module stretches follow at residues 1038–2517 (DEPI…AGEL), 2538–4063 (EDPI…LQRI), 4084–5636 (DDPI…GSEV), and 5655–7400 (DEPV…GEQL). Residues Cys1201, His1336, and His1376 each act as for beta-ketoacyl synthase 1 activity in the active site. Positions 2442–2517 (RVLLDLVRGR…ALAEHLAGEL (76 aa)) constitute a Carrier 2 domain. Residue Ser2477 is modified to O-(pantetheine 4'-phosphoryl)serine. The Ketosynthase family 3 (KS3) 3 domain maps to 2538-2964 (EDPIAIVAMS…GTNAHVIIEE (427 aa)). Residues Cys2711, His2846, and His2886 each act as for beta-ketoacyl synthase 2 activity in the active site. In terms of domain architecture, Carrier 3 spans 3988-4063 (QALQDLVLTE…ATTEYLLQRI (76 aa)). At Ser4023 the chain carries O-(pantetheine 4'-phosphoryl)serine. The region spanning 4084–4514 (DDPIAIVAMG…GTNAHVILEQ (431 aa)) is the Ketosynthase family 3 (KS3) 4 domain. Catalysis depends on for beta-ketoacyl synthase 3 activity residues Cys4261, His4396, and His4436. Residues 5561–5636 (TALLDLIRGQ…ALAEYVGSEV (76 aa)) form the Carrier 4 domain. Ser5596 carries the post-translational modification O-(pantetheine 4'-phosphoryl)serine. One can recognise a Ketosynthase family 3 (KS3) 5 domain in the interval 5655–6081 (DEPVAIIGMS…GTNAHVILEQ (427 aa)). Active-site for beta-ketoacyl synthase 4 activity residues include Cys5828, His5963, and His6003. An N-terminal hotdog fold region spans residues 6561–6685 (HPLLGAAVAL…GVLASGAATV (125 aa)). The PKS/mFAS DH domain maps to 6561 to 6841 (HPLLGAAVAL…LRPVSADTIA (281 aa)). His6593 functions as the Proton acceptor; for dehydratase activity in the catalytic mechanism. The C-terminal hotdog fold stretch occupies residues 6700-6841 (ATAVDIDGLY…LRPVSADTIA (142 aa)). The active-site Proton donor; for dehydratase activity is Asp6761. The Carrier 5 domain occupies 7325–7400 (QELLDFVCEH…LLAGHIGEQL (76 aa)). Residue Ser7360 is modified to O-(pantetheine 4'-phosphoryl)serine.

Homodimer. The loading module (LM, residues 13-926) dimerizes. LM cross-links to its cognate acyl-carrier domain in a manner that seems physiological; mutation of residues in the 2 domains alters reactions efficiency in a manner predicted by the cross-linked crystal. It depends on pantetheine 4'-phosphate as a cofactor.

Its pathway is antibiotic biosynthesis. In terms of biological role, first protein in the synthesis of the 16-membered macrolide antibiotics FD-891 and FD-892. Composed of 5 modules; the first is a loading module (LM) that synthesizes a starter unit used by the first elongation module for polyketide chain elongation. The starter unit is extended by multiple rounds of addition of malonyl-CoA or methylmalonyl-CoA, and other modifications to help generate the final products. The loading module (residues 1-927, LM with an inactive acyltransferase domain) preferentially decarboxylates malonyl-GfsA acyl carrier protein of the LM (ACP-LM) over methylmalonyl-GfsA ACP-LM and has no activity on malonyl-CoA or methymalonyl-CoA. LM decarboxylates malonyl-ACP-LM better than the malonyl-ACP-1 module of GfsA (i.e. the next module in the same protein) and has no activity on other malonyl-ACP modules. This Streptomyces halstedii protein is Polyketide synthase GfsA.